Here is a 78-residue protein sequence, read N- to C-terminus: Putative protein PeaD (78 aa).

Belongs to the phage P protein family.

The protein is Putative protein PeaD (peaD) of Escherichia coli (strain K12).